The following is a 479-amino-acid chain: Glutamyl-tRNA reductase (479 aa).

Substrate is bound by residues 48–51, serine 104, 109–111, and glutamine 115; these read TCNR and ERQ. Cysteine 49 serves as the catalytic Nucleophile. Residue 189-194 participates in NADP(+) binding; sequence GAGKMG. The segment at 417–455 is disordered; the sequence is DAGRSLAEAPDADTPDLGEAPSRCPYMTHDPGGDGTETE.

This sequence belongs to the glutamyl-tRNA reductase family. In terms of assembly, homodimer.

The catalysed reaction is (S)-4-amino-5-oxopentanoate + tRNA(Glu) + NADP(+) = L-glutamyl-tRNA(Glu) + NADPH + H(+). It functions in the pathway porphyrin-containing compound metabolism; protoporphyrin-IX biosynthesis; 5-aminolevulinate from L-glutamyl-tRNA(Glu): step 1/2. Functionally, catalyzes the NADPH-dependent reduction of glutamyl-tRNA(Glu) to glutamate 1-semialdehyde (GSA). The chain is Glutamyl-tRNA reductase from Salinibacter ruber (strain DSM 13855 / M31).